A 459-amino-acid polypeptide reads, in one-letter code: Cysteine--tRNA ligase (459 aa).

C28 contacts Zn(2+). The 'HIGH' region signature appears at 30-40; that stretch reads VTIYDLCHIGH. Zn(2+)-binding residues include C209, H234, and E238. The short motif at 266–270 is the 'KMSKS' region element; that stretch reads KMSKS. Position 269 (K269) interacts with ATP.

It belongs to the class-I aminoacyl-tRNA synthetase family. Monomer. It depends on Zn(2+) as a cofactor.

It is found in the cytoplasm. It carries out the reaction tRNA(Cys) + L-cysteine + ATP = L-cysteinyl-tRNA(Cys) + AMP + diphosphate. This chain is Cysteine--tRNA ligase, found in Shewanella baltica (strain OS155 / ATCC BAA-1091).